The primary structure comprises 688 residues: ATP-dependent zinc metalloprotease FTSH 6, chloroplastic (688 aa).

Residues 1-75 constitute a chloroplast transit peptide; the sequence is MKMASSSSAL…GFTSALGTVL (75 aa). Residues 25–36 are compositionally biased toward polar residues; the sequence is QQFQKPASLSKS. A disordered region spans residues 25–44; that stretch reads QQFQKPASLSKSSHTHKPSL. The N-terminal 8 residues, 76–83, are a transit peptide targeting the thylakoid; it reads AHPAKAEP. The Lumenal, thylakoid segment spans residues 84-168; the sequence is EAPIEATSNR…AHPMNVNWGA (85 aa). Residues 169 to 189 traverse the membrane as a helical segment; that stretch reads FLLNFLGNLGFPLILLVSLLL. The Stromal portion of the chain corresponds to 190–688; the sequence is TSSSRRNPAG…RIRINDLISV (499 aa). 264-271 contributes to the ATP binding site; it reads GPPGTGKT. H485 contacts Zn(2+). The active site involves E486. Residues H489 and D563 each contribute to the Zn(2+) site.

In the N-terminal section; belongs to the AAA ATPase family. The protein in the C-terminal section; belongs to the peptidase M41 family. Requires Zn(2+) as cofactor.

It is found in the plastid. It localises to the chloroplast thylakoid membrane. Probable ATP-dependent zinc metallopeptidase. Involved in the degradation of the light-harvesting complex of photosystem II (LHC II) during senescence or high light acclimation. In Arabidopsis thaliana (Mouse-ear cress), this protein is ATP-dependent zinc metalloprotease FTSH 6, chloroplastic (FTSH6).